Reading from the N-terminus, the 311-residue chain is Quinolinate synthase (311 aa).

The iminosuccinate site is built by histidine 25 and serine 42. Cysteine 87 provides a ligand contact to [4Fe-4S] cluster. Iminosuccinate contacts are provided by residues 113–115 (YIN) and serine 130. Cysteine 175 contributes to the [4Fe-4S] cluster binding site. Iminosuccinate contacts are provided by residues 201–203 (HPE) and threonine 218. Cysteine 268 contributes to the [4Fe-4S] cluster binding site.

This sequence belongs to the quinolinate synthase family. Type 2 subfamily. It depends on [4Fe-4S] cluster as a cofactor.

It is found in the cytoplasm. It carries out the reaction iminosuccinate + dihydroxyacetone phosphate = quinolinate + phosphate + 2 H2O + H(+). Its pathway is cofactor biosynthesis; NAD(+) biosynthesis; quinolinate from iminoaspartate: step 1/1. Catalyzes the condensation of iminoaspartate with dihydroxyacetone phosphate to form quinolinate. This Saccharolobus solfataricus (strain ATCC 35092 / DSM 1617 / JCM 11322 / P2) (Sulfolobus solfataricus) protein is Quinolinate synthase.